The sequence spans 344 residues: Heat-inducible transcription repressor HrcA (344 aa).

The protein belongs to the HrcA family.

Functionally, negative regulator of class I heat shock genes (grpE-dnaK-dnaJ and groELS operons). Prevents heat-shock induction of these operons. This is Heat-inducible transcription repressor HrcA from Streptococcus pneumoniae (strain ATCC 700669 / Spain 23F-1).